Reading from the N-terminus, the 401-residue chain is Tyrosine--tRNA ligase (401 aa).

A 'HIGH' region motif is present at residues 45–54; that stretch reads PTAPDLHLGH. Positions 230 to 234 match the 'KMSKS' region motif; the sequence is KMSKS. An ATP-binding site is contributed by K233. In terms of domain architecture, S4 RNA-binding spans 339 to 399; the sequence is IWLAKALVEC…GKRKFAKLKV (61 aa).

This sequence belongs to the class-I aminoacyl-tRNA synthetase family. TyrS type 2 subfamily. As to quaternary structure, homodimer.

The protein localises to the cytoplasm. It carries out the reaction tRNA(Tyr) + L-tyrosine + ATP = L-tyrosyl-tRNA(Tyr) + AMP + diphosphate + H(+). In terms of biological role, catalyzes the attachment of tyrosine to tRNA(Tyr) in a two-step reaction: tyrosine is first activated by ATP to form Tyr-AMP and then transferred to the acceptor end of tRNA(Tyr). This Campylobacter jejuni subsp. jejuni serotype O:2 (strain ATCC 700819 / NCTC 11168) protein is Tyrosine--tRNA ligase.